An 871-amino-acid polypeptide reads, in one-letter code: Protein arg-6, mitochondrial (871 aa).

The N-terminal 44 residues, 1-44 (MYSACAVALRAGARRVVRRVPKSARALPRAAAARRQISTTAARS), are a transit peptide targeting the mitochondrion. The 153-residue stretch at 336–488 (QASTSLSEFK…DFTENGRAML (153 aa)) folds into the N-acetyltransferase domain. Cys-689 is a catalytic residue.

It in the N-terminal section; belongs to the acetylglutamate kinase family. This sequence in the C-terminal section; belongs to the NAGSA dehydrogenase family. The protein precursor is cleaved into the two biologically active enzymes, the kinase and the reductase.

It is found in the mitochondrion. It catalyses the reaction N-acetyl-L-glutamate 5-semialdehyde + phosphate + NADP(+) = N-acetyl-L-glutamyl 5-phosphate + NADPH + H(+). The catalysed reaction is N-acetyl-L-glutamate + ATP = N-acetyl-L-glutamyl 5-phosphate + ADP. The protein operates within amino-acid biosynthesis; L-arginine biosynthesis; N(2)-acetyl-L-ornithine from L-glutamate: step 2/4. It functions in the pathway amino-acid biosynthesis; L-arginine biosynthesis; N(2)-acetyl-L-ornithine from L-glutamate: step 3/4. This Neurospora crassa (strain ATCC 24698 / 74-OR23-1A / CBS 708.71 / DSM 1257 / FGSC 987) protein is Protein arg-6, mitochondrial (arg-6).